We begin with the raw amino-acid sequence, 396 residues long: Succinyl-diaminopimelate desuccinylase (396 aa).

Residue His-74 coordinates Zn(2+). Asp-76 is an active-site residue. Residue Asp-107 coordinates Zn(2+). Glu-142 functions as the Proton acceptor in the catalytic mechanism. 3 residues coordinate Zn(2+): Glu-143, Glu-171, and His-360.

Belongs to the peptidase M20A family. DapE subfamily. In terms of assembly, homodimer. It depends on Zn(2+) as a cofactor. Co(2+) serves as cofactor.

The enzyme catalyses N-succinyl-(2S,6S)-2,6-diaminopimelate + H2O = (2S,6S)-2,6-diaminopimelate + succinate. It functions in the pathway amino-acid biosynthesis; L-lysine biosynthesis via DAP pathway; LL-2,6-diaminopimelate from (S)-tetrahydrodipicolinate (succinylase route): step 3/3. Its function is as follows. Catalyzes the hydrolysis of N-succinyl-L,L-diaminopimelic acid (SDAP), forming succinate and LL-2,6-diaminopimelate (DAP), an intermediate involved in the bacterial biosynthesis of lysine and meso-diaminopimelic acid, an essential component of bacterial cell walls. The chain is Succinyl-diaminopimelate desuccinylase from Methylobacterium nodulans (strain LMG 21967 / CNCM I-2342 / ORS 2060).